The chain runs to 377 residues: Prostaglandin reductase-3 (377 aa).

The residue at position 35 (lysine 35) is an N6-acetyllysine. NADP(+) contacts are provided by threonine 185, serine 205, lysine 209, tyrosine 224, serine 247, isoleucine 269, and tyrosine 275. Serine 299 is modified (phosphoserine). NADP(+) is bound by residues 303–305 (FFL) and asparagine 361.

Belongs to the zinc-containing alcohol dehydrogenase family. Quinone oxidoreductase subfamily. As to expression, widely expressed.

The protein localises to the peroxisome. The catalysed reaction is 13,14-dihydro-15-oxo-prostaglandin E2 + NADP(+) = 15-oxoprostaglandin E2 + NADPH + H(+). It catalyses the reaction 13,14-dihydro-15-oxo-prostaglandin E1 + NADP(+) = 15-oxoprostaglandin E1 + NADPH + H(+). It carries out the reaction 13,14-dihydro-15-oxo-PGF2alpha + NADP(+) = 15-oxoprostaglandin F2alpha + NADPH + H(+). The enzyme catalyses 13,14-dihydro-15-oxo-prostaglandin F1alpha + NADP(+) = 15-oxoprostaglandin F1alpha + NADPH + H(+). In terms of biological role, functions as 15-oxo-prostaglandin 13-reductase and acts on 15-keto-PGE1, 15-keto-PGE2, 15-keto-PGE1-alpha and 15-keto-PGE2-alpha with highest efficiency towards 15-keto-PGE2-alpha. Overexpression represses transcriptional activity of PPARG and inhibits adipocyte differentiation. The sequence is that of Prostaglandin reductase-3 from Mus musculus (Mouse).